We begin with the raw amino-acid sequence, 396 residues long: Interactor of constitutive active ROPs 5 (396 aa).

Disordered stretches follow at residues 1–49 (MQTP…TQIP) and 99–122 (ALKREAQEEAEDAKHQLMDINASE). 2 coiled-coil regions span residues 67-124 (KKRT…SEDS) and 158-366 (LSSA…TAAS). Positions 99–115 (ALKREAQEEAEDAKHQL) are enriched in basic and acidic residues.

It belongs to the ICR family. Component of the active ARAC10-IRC5-KIN13A complex. Homooligomer. Interacts (via C-terminus) with ARAC4, ARAC10, ARAC11 and (via N-terminus) with KIN13A (via C-terminus), but no interactions with SEC3A. In terms of tissue distribution, expressed in xylem cells in the roots and in stamens, petals and pollen.

The protein localises to the cell membrane. It is found in the cytoplasm. The protein resides in the cytoskeleton. Its function is as follows. ROP effector binding specifically activated ROPs and linking them to the microtubule cytoskeleton. Involved in ROP-regulated polar growth. Involved in local disassembly of cortical microtubules when associated with ARAC10 and KIN13A and conversely also mediates the elimination of ARAC10 from the plasma membrane by the cortical microtubules. Accumulates at the plus end of shrinking microtubules. Targets KIN13A to microtubules. The polypeptide is Interactor of constitutive active ROPs 5 (ICR5) (Arabidopsis thaliana (Mouse-ear cress)).